The sequence spans 88 residues: Exodeoxyribonuclease 7 small subunit (88 aa).

Residues 68–88 (SDPMHPDDGEPFDPSLVSTSQ) form a disordered region.

It belongs to the XseB family. Heterooligomer composed of large and small subunits.

It localises to the cytoplasm. It catalyses the reaction Exonucleolytic cleavage in either 5'- to 3'- or 3'- to 5'-direction to yield nucleoside 5'-phosphates.. Functionally, bidirectionally degrades single-stranded DNA into large acid-insoluble oligonucleotides, which are then degraded further into small acid-soluble oligonucleotides. The polypeptide is Exodeoxyribonuclease 7 small subunit (Xylella fastidiosa (strain 9a5c)).